A 317-amino-acid chain; its full sequence is MELPIAQFPDVQANRPKIPINLTRVGVTGVKKLVEIKRKDKRPIVLISTFEIFVDLPSDRKGANLSRNFEAMDEVLEKAINLPVYEIEKLCNDVAKSLLRRHEYATRSEVRMKSEYVVKREAPSTKMKCQEVVDIFAEATATRLEDGDIDVKKLIGAEVVGMTACPCAQEIMRDNAKTALRELGVGLETVMNFLNKVPMATHNQRGRGIISLEVSGDVDVSLETIIRIIESSMSSSIVELLKRADEALVVERAHQNPKFVEDCVRTMAQNIVSEFAHVPDSALVTIKQINEESIHRHNAFAERVALLGDLRDEIKNN.

Belongs to the GTP cyclohydrolase IV family. As to quaternary structure, homodimer. The cofactor is Fe(2+).

The enzyme catalyses GTP + H2O = 7,8-dihydroneopterin 2',3'-cyclic phosphate + formate + diphosphate + H(+). Its pathway is cofactor biosynthesis; 5,6,7,8-tetrahydromethanopterin biosynthesis. Functionally, converts GTP to 7,8-dihydro-D-neopterin 2',3'-cyclic phosphate, the first intermediate in the biosynthesis of coenzyme methanopterin. The protein is GTP cyclohydrolase MptA of Methanococcoides burtonii (strain DSM 6242 / NBRC 107633 / OCM 468 / ACE-M).